The chain runs to 116 residues: Small ribosomal subunit protein uS13m (116 aa).

This sequence belongs to the universal ribosomal protein uS13 family. Part of the small ribosomal subunit.

The protein resides in the mitochondrion. Functionally, located at the top of the head of the small subunit, it contacts several helices of the 18S rRNA. The chain is Small ribosomal subunit protein uS13m (RPS13) from Nicotiana tabacum (Common tobacco).